The following is a 129-amino-acid chain: Small ribosomal subunit protein uS11 (129 aa).

It belongs to the universal ribosomal protein uS11 family. In terms of assembly, part of the 30S ribosomal subunit. Interacts with proteins S7 and S18. Binds to IF-3.

Located on the platform of the 30S subunit, it bridges several disparate RNA helices of the 16S rRNA. Forms part of the Shine-Dalgarno cleft in the 70S ribosome. This is Small ribosomal subunit protein uS11 from Yersinia pseudotuberculosis serotype O:1b (strain IP 31758).